Here is a 356-residue protein sequence, read N- to C-terminus: Phospho-N-acetylmuramoyl-pentapeptide-transferase (356 aa).

10 helical membrane-spanning segments follow: residues 25 to 45, 70 to 90, 93 to 113, 138 to 158, 164 to 184, 195 to 215, 235 to 255, 258 to 278, 284 to 304, and 333 to 353; these read TVAA…SIIA, GTPT…AFLW, LSNI…MIGF, FLIA…GLAL, YFIN…VGTG, GLAI…AYLS, LAVL…FNAP, AIFM…IVAV, IVLA…VIQV, and QVVI…LSTL.

It belongs to the glycosyltransferase 4 family. MraY subfamily. Mg(2+) serves as cofactor.

It localises to the cell inner membrane. It catalyses the reaction UDP-N-acetyl-alpha-D-muramoyl-L-alanyl-gamma-D-glutamyl-meso-2,6-diaminopimeloyl-D-alanyl-D-alanine + di-trans,octa-cis-undecaprenyl phosphate = di-trans,octa-cis-undecaprenyl diphospho-N-acetyl-alpha-D-muramoyl-L-alanyl-D-glutamyl-meso-2,6-diaminopimeloyl-D-alanyl-D-alanine + UMP. Its pathway is cell wall biogenesis; peptidoglycan biosynthesis. Its function is as follows. Catalyzes the initial step of the lipid cycle reactions in the biosynthesis of the cell wall peptidoglycan: transfers peptidoglycan precursor phospho-MurNAc-pentapeptide from UDP-MurNAc-pentapeptide onto the lipid carrier undecaprenyl phosphate, yielding undecaprenyl-pyrophosphoryl-MurNAc-pentapeptide, known as lipid I. This Bartonella quintana (strain Toulouse) (Rochalimaea quintana) protein is Phospho-N-acetylmuramoyl-pentapeptide-transferase.